The chain runs to 142 residues: NADH-quinone oxidoreductase subunit A 2 (142 aa).

3 helical membrane-spanning segments follow: residues 18 to 38 (FLPL…LLLA), 73 to 93 (FYLI…IFAW), and 104 to 124 (GLVH…WLWL).

Belongs to the complex I subunit 3 family. In terms of assembly, NDH-1 is composed of 14 different subunits. Subunits NuoA, H, J, K, L, M, N constitute the membrane sector of the complex.

The protein localises to the cell inner membrane. It catalyses the reaction a quinone + NADH + 5 H(+)(in) = a quinol + NAD(+) + 4 H(+)(out). In terms of biological role, NDH-1 shuttles electrons from NADH, via FMN and iron-sulfur (Fe-S) centers, to quinones in the respiratory chain. The immediate electron acceptor for the enzyme in this species is believed to be ubiquinone. Couples the redox reaction to proton translocation (for every two electrons transferred, four hydrogen ions are translocated across the cytoplasmic membrane), and thus conserves the redox energy in a proton gradient. In Geobacter sulfurreducens (strain ATCC 51573 / DSM 12127 / PCA), this protein is NADH-quinone oxidoreductase subunit A 2.